The primary structure comprises 58 residues: Large ribosomal subunit protein uL30 (58 aa).

Belongs to the universal ribosomal protein uL30 family. As to quaternary structure, part of the 50S ribosomal subunit.

The chain is Large ribosomal subunit protein uL30 from Psychromonas ingrahamii (strain DSM 17664 / CCUG 51855 / 37).